The following is a 111-amino-acid chain: Integration host factor subunit alpha (111 aa).

It belongs to the bacterial histone-like protein family. Heterodimer of an alpha and a beta chain.

This protein is one of the two subunits of integration host factor, a specific DNA-binding protein that functions in genetic recombination as well as in transcriptional and translational control. The polypeptide is Integration host factor subunit alpha (Chelativorans sp. (strain BNC1)).